The chain runs to 670 residues: tRNA 5-methylaminomethyl-2-thiouridine biosynthesis bifunctional protein MnmC (670 aa).

Residues 1–242 (MTFSVQHAEI…KRECLSGLKI (242 aa)) are tRNA (mnm(5)s(2)U34)-methyltransferase. The tract at residues 269 to 670 (IGGGIASLCA…KKWLKGSKVE (402 aa)) is FAD-dependent cmnm(5)s(2)U34 oxidoreductase.

This sequence in the N-terminal section; belongs to the methyltransferase superfamily. tRNA (mnm(5)s(2)U34)-methyltransferase family. The protein in the C-terminal section; belongs to the DAO family. FAD serves as cofactor.

The protein localises to the cytoplasm. The enzyme catalyses 5-aminomethyl-2-thiouridine(34) in tRNA + S-adenosyl-L-methionine = 5-methylaminomethyl-2-thiouridine(34) in tRNA + S-adenosyl-L-homocysteine + H(+). In terms of biological role, catalyzes the last two steps in the biosynthesis of 5-methylaminomethyl-2-thiouridine (mnm(5)s(2)U) at the wobble position (U34) in tRNA. Catalyzes the FAD-dependent demodification of cmnm(5)s(2)U34 to nm(5)s(2)U34, followed by the transfer of a methyl group from S-adenosyl-L-methionine to nm(5)s(2)U34, to form mnm(5)s(2)U34. This is tRNA 5-methylaminomethyl-2-thiouridine biosynthesis bifunctional protein MnmC from Haemophilus influenzae (strain PittGG).